A 161-amino-acid chain; its full sequence is RNA pyrophosphohydrolase (161 aa).

Residues 12–154 enclose the Nudix hydrolase domain; the sequence is PYRPGVGMMI…KRKLYQAVVK (143 aa). Residues 46–67 carry the Nudix box motif; that stretch reads GGIVPGETPSIAAMREMLEEIG.

Belongs to the Nudix hydrolase family. RppH subfamily. Requires a divalent metal cation as cofactor.

Functionally, accelerates the degradation of transcripts by removing pyrophosphate from the 5'-end of triphosphorylated RNA, leading to a more labile monophosphorylated state that can stimulate subsequent ribonuclease cleavage. The chain is RNA pyrophosphohydrolase from Rickettsia conorii (strain ATCC VR-613 / Malish 7).